We begin with the raw amino-acid sequence, 226 residues long: Uridylate kinase (226 aa).

Lys-6–Lys-10 contributes to the ATP binding site. Gly-43 is a binding site for UMP. The ATP site is built by Gly-44 and Arg-48. UMP is bound by residues Asp-65 and Phe-113 to Thr-119. Positions 139, 140, 145, and 148 each coordinate ATP.

The protein belongs to the UMP kinase family. Homohexamer.

The protein localises to the cytoplasm. It catalyses the reaction UMP + ATP = UDP + ADP. The protein operates within pyrimidine metabolism; CTP biosynthesis via de novo pathway; UDP from UMP (UMPK route): step 1/1. Its activity is regulated as follows. Inhibited by UTP. In terms of biological role, catalyzes the reversible phosphorylation of UMP to UDP. This is Uridylate kinase from Sulfurisphaera tokodaii (strain DSM 16993 / JCM 10545 / NBRC 100140 / 7) (Sulfolobus tokodaii).